Here is a 165-residue protein sequence, read N- to C-terminus: MSLLINSTTLGNIIITLGSVFLLYYLIRKFAWDQITGIFVAREKKIATDIDSAENARQEAEILVQKRQEELAAARTEATQIIDEAKKTGKTKESKIIAEAYDEAKRLKEKANQDIAQSWVEALAGVKGEVADLTVLLAEKVMKQNLDAKAQSDLIDSYLDQLGDA.

The chain crosses the membrane as a helical span at residues 5-27; sequence INSTTLGNIIITLGSVFLLYYLI.

This sequence belongs to the ATPase B chain family. As to quaternary structure, F-type ATPases have 2 components, F(1) - the catalytic core - and F(0) - the membrane proton channel. F(1) has five subunits: alpha(3), beta(3), gamma(1), delta(1), epsilon(1). F(0) has three main subunits: a(1), b(2) and c(10-14). The alpha and beta chains form an alternating ring which encloses part of the gamma chain. F(1) is attached to F(0) by a central stalk formed by the gamma and epsilon chains, while a peripheral stalk is formed by the delta and b chains.

Its subcellular location is the cell membrane. Functionally, f(1)F(0) ATP synthase produces ATP from ADP in the presence of a proton or sodium gradient. F-type ATPases consist of two structural domains, F(1) containing the extramembraneous catalytic core and F(0) containing the membrane proton channel, linked together by a central stalk and a peripheral stalk. During catalysis, ATP synthesis in the catalytic domain of F(1) is coupled via a rotary mechanism of the central stalk subunits to proton translocation. Its function is as follows. Component of the F(0) channel, it forms part of the peripheral stalk, linking F(1) to F(0). This is ATP synthase subunit b from Streptococcus thermophilus (strain CNRZ 1066).